Here is a 1263-residue protein sequence, read N- to C-terminus: Histone-lysine N-methyltransferase EHMT2 (1263 aa).

2 disordered regions span residues 1 to 314 and 332 to 439; these read MRGL…LEEW and DERV…EYME. A compositionally biased stretch (basic residues) spans 26–39; it reads GRGRGGAHRGRGRP. At Arg-40 the chain carries Asymmetric dimethylarginine. Residues 83–95 show a composition bias toward basic and acidic residues; sequence LEKEPRGAAERVH. Position 97 is a phosphoserine (Ser-97). Residue Thr-101 is modified to Phosphothreonine. Residues Ser-104 and Ser-193 each carry the phosphoserine modification. Lys-239 bears the N6,N6,N6-trimethyllysine; by EHMT2; alternate mark. The residue at position 239 (Lys-239) is an N6,N6-dimethyllysine; by EHMT2; alternate. Over residues 252–270 the composition is skewed to basic and acidic residues; that stretch reads PEKRPPEVQHFRMSDDMHL. Residues Lys-272 and Lys-282 each participate in a glycyl lysine isopeptide (Lys-Gly) (interchain with G-Cter in SUMO2) cross-link. Phosphoserine is present on residues Ser-285, Ser-294, and Ser-298. Basic and acidic residues-rich tracts occupy residues 302–312 and 332–343; these read ILEKGEPRPLE and DERVDSDSKSEV. Residues 350–380 show a composition bias toward acidic residues; sequence LSEEEEEEEEEEEEEEEEEEEEEEEEEDEES. Basic residues predominate over residues 391 to 400; it reads GRRKAKKKWR. Residues Ser-403, Ser-465, and Ser-466 each carry the phosphoserine modification. Residue Thr-608 is modified to Phosphothreonine. The segment at 621-647 is disordered; sequence LAHDAPGRADTSQPSARMRGHGEPRRP. Lys-687 is covalently cross-linked (Glycyl lysine isopeptide (Lys-Gly) (interchain with G-Cter in SUMO2)). ANK repeat units lie at residues 702 to 731, 737 to 766, 770 to 799, 803 to 833, 837 to 866, 870 to 899, and 903 to 932; these read FHPRQLYLSVKQGELQKVILMLLDNLDPNF, SKRTPLHAAAQKGSVEICHVLLQAGANINA, QQRTPLMEAVVNNHLEVARYMVQLGGCVYS, DGSTCLHHAAKIGNLEMVSLLLSTGQVDVNA, GGWTPIIWAAEHKHIDVIRMLLTRGADVTL, EENICLHWASFTGSAAIAEVLLNAQCDLHA, and HGDTPLHIAARESYHDCVLLFLSRGANPEL. Residues 870–872 form a histone H3K9me binding region; it reads EEN. The 64-residue stretch at 1025–1088 folds into the Pre-SET domain; it reads QHCTCVDDCS…SCKNRVVQSG (64 aa). Residues Cys-1027, Cys-1029, Cys-1033, Cys-1038, Cys-1040, Cys-1070, Cys-1074, Cys-1076, and Cys-1080 each coordinate Zn(2+). The region spanning 1091–1208 is the SET domain; the sequence is VRLQLYRTAK…TGEELGFDYG (118 aa). S-adenosyl-L-methionine-binding positions include 1101–1103, Tyr-1138, and 1165–1166; these read MGW and NH. The tract at residues 1127-1146 is interaction with histone H3; sequence DAEADVREDDSYLFDLDNKD. Cys-1168 serves as a coordination point for Zn(2+). The interaction with histone H3 stretch occupies residues 1207-1210; sequence YGDR. Positions 1217-1233 constitute a Post-SET domain; sequence KYFTCQCGSEKCKHSAE. The Zn(2+) site is built by Cys-1221, Cys-1223, and Cys-1228. Ser-1257 carries the post-translational modification Phosphoserine. Thr-1263 carries the post-translational modification Phosphothreonine.

Belongs to the class V-like SAM-binding methyltransferase superfamily. Histone-lysine methyltransferase family. Suvar3-9 subfamily. Heterodimer; heterodimerizes with EHMT1/GLP. Interacts with GFI1B and WIZ. Part of the E2F6.com-1 complex in G0 phase composed of E2F6, MGA, MAX, TFDP1, CBX3, BAT8, EHMT1, RING1, RNF2, MBLR, L3MBTL2 and YAF2. Part of a complex composed of TRIM28, HDAC1, HDAC2 and EHMT2. Interacts with UHRF1. Interacts with CDYL. Interacts with REST only in the presence of CDYL. Part of a complex containing at least CDYL, REST, WIZ, SETB1, EHMT1 and EHMT2. Interacts with PRDM9 and CDYL; interaction only takes place when PRDM9 is bound to hotspot DNA. Interacts with SMYD5. In terms of processing, methylated at Lys-239; automethylated. As to expression, ubiquitous.

The protein resides in the nucleus. It localises to the chromosome. It carries out the reaction N(6)-methyl-L-lysyl(9)-[histone H3] + S-adenosyl-L-methionine = N(6),N(6)-dimethyl-L-lysyl(9)-[histone H3] + S-adenosyl-L-homocysteine + H(+). The enzyme catalyses L-lysyl(9)-[histone H3] + S-adenosyl-L-methionine = N(6)-methyl-L-lysyl(9)-[histone H3] + S-adenosyl-L-homocysteine + H(+). In terms of biological role, histone methyltransferase that specifically mono- and dimethylates 'Lys-9' of histone H3 (H3K9me1 and H3K9me2, respectively) in euchromatin. H3K9me represents a specific tag for epigenetic transcriptional repression by recruiting HP1 proteins to methylated histones. Also mediates monomethylation of 'Lys-56' of histone H3 (H3K56me1) in G1 phase, leading to promote interaction between histone H3 and PCNA and regulating DNA replication. Also weakly methylates 'Lys-27' of histone H3 (H3K27me). Also required for DNA methylation, the histone methyltransferase activity is not required for DNA methylation, suggesting that these 2 activities function independently. Probably targeted to histone H3 by different DNA-binding proteins like E2F6, MGA, MAX and/or DP1. May also methylate histone H1. In addition to the histone methyltransferase activity, also methylates non-histone proteins: mediates dimethylation of 'Lys-373' of p53/TP53. Also methylates CDYL, WIZ, ACIN1, DNMT1, HDAC1, ERCC6, KLF12 and itself. In Mus musculus (Mouse), this protein is Histone-lysine N-methyltransferase EHMT2 (Ehmt2).